Here is a 460-residue protein sequence, read N- to C-terminus: Mogroside I-E synthase (460 aa).

The active-site Proton acceptor is the histidine 25. The active-site Charge relay is aspartate 114. Residues serine 286, cysteine 339, glutamine 341, tryptophan 359, asparagine 360, serine 361, glutamate 364, aspartate 380, and glutamine 381 each contribute to the UDP-alpha-D-glucose site.

This sequence belongs to the UDP-glycosyltransferase family. In terms of tissue distribution, highly expressed in young fruits 15 days after anthesis (15-DAA).

It carries out the reaction mogrol + UDP-alpha-D-glucose = mogroside IE + UDP + H(+). The enzyme catalyses mogroside I-A1 + UDP-alpha-D-glucose = mogroside IIE + UDP + H(+). It catalyses the reaction mogroside II-A1 + UDP-alpha-D-glucose = mogroside IIIX + UDP + H(+). The catalysed reaction is mogroside II-A + UDP-alpha-D-glucose = mogroside III + UDP + H(+). It carries out the reaction mogroside III-A1 + UDP-alpha-D-glucose = siamenoside I + UDP + H(+). The protein operates within secondary metabolite biosynthesis; terpenoid biosynthesis. In terms of biological role, UDP-glycosyltransferase involved in the biosynthesis of cucurbitacin and mogroside tetracyclic triterpene natural products (e.g. siamenoside I and mogrosides IV, V and VI). Cucurbitacins have cytotoxic properties and exhibit deterrent taste as a defense barrier against herbivores. Mogrosides are nonsugar highly oxygenated compounds used as high-intensity zero-calorie sweeteners; they also possess pharmacological properties such as regulating immunity, lowering blood sugar and lipid levels, protecting the liver, and acting as antioxidants and antitumor agents. Catalyzes the C3 primary glucosylation of mogrol, mogroside I-A1, mogroside II-A1, mogroside II-A and mogroside III-A1. This is Mogroside I-E synthase from Siraitia grosvenorii (Monk's fruit).